Here is a 121-residue protein sequence, read N- to C-terminus: MSKLVPCLLLLGCLGLLFALPVPDSRKEPLPFSAPEDVRSAWDELERASLLQMLPETPGAEAGEDLREADAGMDIFYPRGEMRKAFSGQDPNIFLSHLLARIKKPYKKRGPPSECFWKYCV.

The N-terminal stretch at 1-19 (MSKLVPCLLLLGCLGLLFA) is a signal peptide. The propeptide occupies 20–106 (LPVPDSRKEP…HLLARIKKPY (87 aa)). A disulfide bridge links Cys115 with Cys120.

It belongs to the urotensin-2 family.

The protein localises to the secreted. Functionally, highly potent vasoconstrictor. This is Urotensin-2 (UTS2) from Sus scrofa (Pig).